The primary structure comprises 470 residues: Cyclin-dependent kinase E-1 (470 aa).

In terms of domain architecture, Protein kinase spans 25-333; it reads YNLVGKIGEG…ASQALEHEYF (309 aa). ATP contacts are provided by residues 31 to 39 and Lys55; that span reads IGEGTYGLV. The residue at position 36 (Tyr36) is a Phosphotyrosine. Asp154 functions as the Proton acceptor in the catalytic mechanism. A disordered region spans residues 428 to 470; sequence LNPSVPLQQQRGMAQPHQQQQLRRKDPGMGMSGYAPPNKSRRL. Residues 432–448 show a composition bias toward polar residues; sequence VPLQQQRGMAQPHQQQQ.

This sequence belongs to the protein kinase superfamily. CMGC Ser/Thr protein kinase family. CDC2/CDKX subfamily. Interacts with MED14, HDA19 and LUG. Interacts with KIN10. As to expression, expressed in roots, leaves and stems. Expressed in young dividing tissue, such as shoot and root tips, lateral root primordia, young leaves and flowers. Expressed in the inflorescence meristem, inflorescence stem and young flowers.

It localises to the nucleus. The enzyme catalyses L-seryl-[protein] + ATP = O-phospho-L-seryl-[protein] + ADP + H(+). It carries out the reaction L-threonyl-[protein] + ATP = O-phospho-L-threonyl-[protein] + ADP + H(+). The catalysed reaction is [DNA-directed RNA polymerase] + ATP = phospho-[DNA-directed RNA polymerase] + ADP + H(+). Its function is as follows. Involved in cell differentiation. Required for the specification of stamen and carpel identities and for the proper termination of stem cells in the floral meristem. This Arabidopsis thaliana (Mouse-ear cress) protein is Cyclin-dependent kinase E-1 (CDKE-1).